Here is a 671-residue protein sequence, read N- to C-terminus: RNA polymerase sigma factor RpoD (671 aa).

2 disordered regions span residues methionine 1–lysine 45 and aspartate 229–lysine 260. A compositionally biased stretch (basic and acidic residues) spans glutamate 251–lysine 260. The interval methionine 436–threonine 506 is sigma-70 factor domain-2. The Interaction with polymerase core subunit RpoC motif lies at aspartate 460–glutamine 463. Residues aspartate 515–histidine 591 are sigma-70 factor domain-3. Residues valine 604–serine 658 form a sigma-70 factor domain-4 region. The segment at residues leucine 631–serine 650 is a DNA-binding region (H-T-H motif).

Belongs to the sigma-70 factor family. RpoD/SigA subfamily. In terms of assembly, interacts transiently with the RNA polymerase catalytic core.

The protein localises to the cytoplasm. Sigma factors are initiation factors that promote the attachment of RNA polymerase to specific initiation sites and are then released. This sigma factor is the primary sigma factor during exponential growth. The polypeptide is RNA polymerase sigma factor RpoD (Helicobacter pylori (strain ATCC 700392 / 26695) (Campylobacter pylori)).